A 412-amino-acid polypeptide reads, in one-letter code: Serine/threonine transporter SstT (412 aa).

The next 10 membrane-spanning stretches (helical) occupy residues 16–36 (LVAQIVVGLLAGALLALFLPG), 44–64 (LGDLFVQALKAVAPVLVFVLV), 82–102 (IIVLYALGTLSAAAVAVLASF), 115–135 (TDVIPPAGVGAVLNTLLFNIV), 141–161 (ALLNGNFIGILAWAIGLGFAF), 179–199 (VTLIVKVVIRFAPLGVFGLVA), 217–237 (LLVLVGAMLFMALVMNPLIVF), 298–318 (MGGAAITITVLTLAAVNTLGI), 330–350 (LLAAVCACGASGVAGGSLLLI), and 357–377 (FGISNDLAMQVVAVGFIIGVV).

It belongs to the dicarboxylate/amino acid:cation symporter (DAACS) (TC 2.A.23) family.

The protein resides in the cell inner membrane. The enzyme catalyses L-serine(in) + Na(+)(in) = L-serine(out) + Na(+)(out). It catalyses the reaction L-threonine(in) + Na(+)(in) = L-threonine(out) + Na(+)(out). Its function is as follows. Involved in the import of serine and threonine into the cell, with the concomitant import of sodium (symport system). The chain is Serine/threonine transporter SstT from Stutzerimonas stutzeri (strain A1501) (Pseudomonas stutzeri).